The following is a 399-amino-acid chain: Beta-1,4-galactosyltransferase 1 (399 aa).

Residues 1 to 24 (MRFREQFLGGSAAMPGATLQRACR) are Cytoplasmic-facing. Residues 25–44 (LLVAVCALHLGVTLVYYLSG) form a helical; Signal-anchor for type II membrane protein membrane-spanning segment. Topologically, residues 45 to 399 (RDLSRLPQLV…QITVDIGTPR (355 aa)) are lumenal. Residues 61–113 (QGGTNGAAASKQPPGEQRPRGARPPPPLGVSPKPRPGLDSSPGAASGPGLKSN) form a disordered region. Residues 82 to 95 (ARPPPPLGVSPKPR) show a composition bias toward pro residues. N113 carries an N-linked (GlcNAc...) asparagine glycan. C131 and C173 form a disulfide bridge. UDP-alpha-D-galactose-binding positions include 184–188 (PFRNR), 223–225 (FNR), 250–251 (VD), and W311. Cysteines 244 and 263 form a disulfide. Position 251 (D251) interacts with Mn(2+). 313–316 (GEDD) lines the N-acetyl-D-glucosamine pocket. H344 is a Mn(2+) binding site. 344–346 (HSR) lines the UDP-alpha-D-galactose pocket. R356 is a binding site for N-acetyl-D-glucosamine.

It belongs to the glycosyltransferase 7 family. In terms of assembly, homodimer; and heterodimer with alpha-lactalbumin to form lactose synthase. Interacts (via N-terminal cytoplasmic domain) with UBE2Q1 (via N-terminus); the interaction is direct. Mn(2+) is required as a cofactor. In terms of processing, the soluble form derives from the membrane forms by proteolytic processing.

The protein resides in the golgi apparatus. The protein localises to the golgi stack membrane. It is found in the cell membrane. Its subcellular location is the cell surface. It localises to the cell projection. The protein resides in the filopodium. The protein localises to the secreted. The catalysed reaction is D-glucose + UDP-alpha-D-galactose = lactose + UDP + H(+). It catalyses the reaction an N-acetyl-beta-D-glucosaminyl derivative + UDP-alpha-D-galactose = a beta-D-galactosyl-(1-&gt;4)-N-acetyl-beta-D-glucosaminyl derivative + UDP + H(+). The enzyme catalyses N-acetyl-D-glucosamine + UDP-alpha-D-galactose = beta-D-galactosyl-(1-&gt;4)-N-acetyl-D-glucosamine + UDP + H(+). It carries out the reaction a beta-D-GlcNAc-(1-&gt;3)-beta-D-Gal-(1-&gt;4)-beta-D-Glc-(1&lt;-&gt;1)-Cer(d18:1(4E)) + UDP-alpha-D-galactose = a neolactoside nLc4Cer(d18:1(4E)) + UDP + H(+). The catalysed reaction is a beta-D-glucosylceramide + UDP-alpha-D-galactose = a beta-D-galactosyl-(1-&gt;4)-beta-D-glucosyl-(1&lt;-&gt;1)-ceramide + UDP + H(+). It catalyses the reaction a neolactoside IV(3)-beta-GlcNAc-nLc4Cer + UDP-alpha-D-galactose = a neolactoside nLc6Cer + UDP + H(+). The protein operates within protein modification; protein glycosylation. Functionally, the Golgi complex form catalyzes the production of lactose in the lactating mammary gland and could also be responsible for the synthesis of complex-type N-linked oligosaccharides in many glycoproteins as well as the carbohydrate moieties of glycolipids. In terms of biological role, the cell surface form functions as a recognition molecule during a variety of cell to cell and cell to matrix interactions, as those occurring during development and egg fertilization, by binding to specific oligosaccharide ligands on opposing cells or in the extracellular matrix. The secreted form is responsible for the synthesis of complex-type to N-linked oligosaccharides in many glycoproteins as well as the carbohydrate moieties of glycolipids. In Mus musculus (Mouse), this protein is Beta-1,4-galactosyltransferase 1.